We begin with the raw amino-acid sequence, 481 residues long: 2-succinylbenzoate--CoA ligase (481 aa).

Belongs to the ATP-dependent AMP-binding enzyme family. MenE subfamily.

It carries out the reaction 2-succinylbenzoate + ATP + CoA = 2-succinylbenzoyl-CoA + AMP + diphosphate. The protein operates within quinol/quinone metabolism; 1,4-dihydroxy-2-naphthoate biosynthesis; 1,4-dihydroxy-2-naphthoate from chorismate: step 5/7. Its pathway is quinol/quinone metabolism; menaquinone biosynthesis. Converts 2-succinylbenzoate (OSB) to 2-succinylbenzoyl-CoA (OSB-CoA). The polypeptide is 2-succinylbenzoate--CoA ligase (Bacillus mycoides (strain KBAB4) (Bacillus weihenstephanensis)).